Reading from the N-terminus, the 145-residue chain is Putative phosphatidylglycerol/phosphatidylinositol transfer protein DDB_G0282179 (145 aa).

Positions 1–20 are cleaved as a signal peptide; the sequence is MIKTILLLLINFMLILIVNG. A glycan (N-linked (GlcNAc...) asparagine) is linked at Asn-134.

It belongs to the NPC2 family. As to quaternary structure, monomer.

Functionally, catalyzes the intermembrane transfer of phosphatidylglycerol and phosphatidylinositol. This is Putative phosphatidylglycerol/phosphatidylinositol transfer protein DDB_G0282179 from Dictyostelium discoideum (Social amoeba).